We begin with the raw amino-acid sequence, 257 residues long: Isoprenyl transferase (257 aa).

The active site involves Asp-34. Mg(2+) is bound at residue Asp-34. Residues 35–38 (GNGR), Trp-39, Arg-47, His-51, and 79–81 (STE) contribute to the substrate site. The active-site Proton acceptor is Asn-82. Residues Trp-83, Arg-85, Arg-202, and 208-210 (RLS) contribute to the substrate site. Mg(2+) is bound at residue Glu-221.

Belongs to the UPP synthase family. As to quaternary structure, homodimer. The cofactor is Mg(2+).

Functionally, catalyzes the condensation of isopentenyl diphosphate (IPP) with allylic pyrophosphates generating different type of terpenoids. The protein is Isoprenyl transferase of Geobacillus kaustophilus (strain HTA426).